A 468-amino-acid chain; its full sequence is Methylenetetrahydrofolate--tRNA-(uracil-5-)-methyltransferase TrmFO (468 aa).

Residue 13–18 participates in FAD binding; the sequence is GGGLAG.

This sequence belongs to the MnmG family. TrmFO subfamily. The cofactor is FAD.

It is found in the cytoplasm. It catalyses the reaction uridine(54) in tRNA + (6R)-5,10-methylene-5,6,7,8-tetrahydrofolate + NADH + H(+) = 5-methyluridine(54) in tRNA + (6S)-5,6,7,8-tetrahydrofolate + NAD(+). It carries out the reaction uridine(54) in tRNA + (6R)-5,10-methylene-5,6,7,8-tetrahydrofolate + NADPH + H(+) = 5-methyluridine(54) in tRNA + (6S)-5,6,7,8-tetrahydrofolate + NADP(+). Functionally, catalyzes the folate-dependent formation of 5-methyl-uridine at position 54 (M-5-U54) in all tRNAs. This Bartonella henselae (strain ATCC 49882 / DSM 28221 / CCUG 30454 / Houston 1) (Rochalimaea henselae) protein is Methylenetetrahydrofolate--tRNA-(uracil-5-)-methyltransferase TrmFO.